The primary structure comprises 1556 residues: Lysine-specific demethylase 5C (1556 aa).

In terms of domain architecture, JmjN spans 14–55; the sequence is CPVFEPSWAEFRDPLGYIAKIRPIAEKSGICKIRPPADWQPP. The ARID domain occupies 79-169; that stretch reads TRVKLNYLDQ…IVYPYEMYQS (91 aa). Polar residues predominate over residues 197-207; sequence LRQSVQPSKFN. The tract at residues 197–227 is disordered; the sequence is LRQSVQPSKFNSYGRRAKRLQPDPEPTEEDI. Residues Lys205, Lys229, Lys244, and Lys274 each participate in a glycyl lysine isopeptide (Lys-Gly) (interchain with G-Cter in SUMO2) cross-link. The disordered stretch occupies residues 257–303; the sequence is LRKKDKEGPECPPTVVVKEESGGDVKVESTSPKTFLESKEELSHSPE. Positions 273–283 are enriched in basic and acidic residues; it reads VKEESGGDVKV. Phosphoserine is present on Ser287. Residue Lys295 forms a Glycyl lysine isopeptide (Lys-Gly) (interchain with G-Cter in SUMO2) linkage. Ser301 and Ser317 each carry phosphoserine. The PHD-type 1 zinc-finger motif lies at 324–374; sequence SYVCRMCSRGDEDDKLLLCDGCDDNYHIFCLLPPLPEIPKGVWRCPKCVMA. The region spanning 468–634 is the JmjC domain; sequence EYATSGWNLN…AGRQCIEHYR (167 aa). Fe cation contacts are provided by His514, Asp517, and His602. 2 positions are modified to phosphoserine: Ser893 and Ser897. Residue Lys1127 forms a Glycyl lysine isopeptide (Lys-Gly) (interchain with G-Cter in SUMO2) linkage. Residues 1185 to 1250 form a PHD-type 2 zinc finger; the sequence is TSVCVCGQVP…KFLCPLCMRS (66 aa). 2 disordered regions span residues 1315-1362 and 1441-1556; these read LQAE…SPEK and ERHG…QQQL. Over residues 1335-1345 the composition is skewed to basic and acidic residues; sequence PLREGSGKDMP. A Phosphoserine modification is found at Ser1359. Basic residues predominate over residues 1445–1460; sequence SRARGRALERRRRRKV. Basic and acidic residues predominate over residues 1461-1478; the sequence is DRGGEGDDPAREELEPKR. Residues 1485 to 1500 are compositionally biased toward acidic residues; it reads EAEEAQEEEELEEETG. Composition is skewed to polar residues over residues 1513–1522 and 1530–1540; these read SPSTQENQNG and SGPSAPFSTLS. Over residues 1541–1556 the composition is skewed to low complexity; sequence PQLHVPCPQQPPQQQL.

The protein belongs to the JARID1 histone demethylase family. In terms of assembly, part of two distinct complexes, one containing E2F6, and the other containing REST. Interacts with ZMYND8. Fe(2+) is required as a cofactor.

It is found in the nucleus. The enzyme catalyses N(6),N(6),N(6)-trimethyl-L-lysyl(4)-[histone H3] + 3 2-oxoglutarate + 3 O2 = L-lysyl(4)-[histone H3] + 3 formaldehyde + 3 succinate + 3 CO2. Histone demethylase that specifically demethylates 'Lys-4' of histone H3, thereby playing a central role in histone code. Does not demethylate histone H3 'Lys-9', H3 'Lys-27', H3 'Lys-36', H3 'Lys-79' or H4 'Lys-20'. Demethylates trimethylated and dimethylated but not monomethylated H3 'Lys-4'. Participates in transcriptional repression of neuronal genes by recruiting histone deacetylases and REST at neuron-restrictive silencer elements. Represses the CLOCK-BMAL1 heterodimer-mediated transcriptional activation of the core clock component PER2. In Canis lupus familiaris (Dog), this protein is Lysine-specific demethylase 5C (KDM5C).